A 191-amino-acid chain; its full sequence is Thymidylate kinase (191 aa).

Residue 7 to 14 (GVDGAGKS) participates in ATP binding.

This sequence belongs to the thymidylate kinase family.

It catalyses the reaction dTMP + ATP = dTDP + ADP. In terms of biological role, phosphorylation of dTMP to form dTDP in both de novo and salvage pathways of dTTP synthesis. The polypeptide is Thymidylate kinase (Helicobacter pylori (strain P12)).